Here is a 393-residue protein sequence, read N- to C-terminus: Ornithine decarboxylase 2 (393 aa).

Lys62 carries the post-translational modification N6-(pyridoxal phosphate)lysine. Residues Ser194, Gly231, and 265-268 (EPGR) contribute to the pyridoxal 5'-phosphate site. 314–315 (YY) is a binding site for substrate. Cys343 acts as the Proton donor; shared with dimeric partner in catalysis. Asp344 provides a ligand contact to substrate. Residue Tyr371 coordinates pyridoxal 5'-phosphate.

Belongs to the Orn/Lys/Arg decarboxylase class-II family. As to quaternary structure, homodimer. Only the dimer is catalytically active, as the active sites are constructed of residues from both monomers. The cofactor is pyridoxal 5'-phosphate.

The catalysed reaction is L-ornithine + H(+) = putrescine + CO2. It functions in the pathway amine and polyamine biosynthesis; putrescine biosynthesis via L-ornithine pathway; putrescine from L-ornithine: step 1/1. With respect to regulation, inhibited by antizyme (AZ) in response to polyamine levels. AZ inhibits the assembly of the functional homodimer by binding to ODC monomers and targeting them for ubiquitin-independent proteolytic destruction by the 26S proteasome. Functionally, catalyzes the first and rate-limiting step of polyamine biosynthesis that converts ornithine into putrescine, which is the precursor for the polyamines, spermidine and spermine. Polyamines are essential for cell proliferation and are implicated in cellular processes, ranging from DNA replication to apoptosis. The protein is Ornithine decarboxylase 2 (Odc2) of Drosophila melanogaster (Fruit fly).